The sequence spans 452 residues: Tripartite motif-containing protein 49C (452 aa).

Residues 15–56 (CPLCMNYFIDPVTIDCGHSFCRPCFYLNWQDIPFLVQCSECT) form an RING-type zinc finger. The B box-type zinc-finger motif lies at 88–129 (SEEQMCGTHRETKKIFCEVDRSLLCLLCSSSQEHRYHRHRPI). Zn(2+) is bound by residues Cys93, His96, Cys115, and His121. The 184-residue stretch at 269-452 (ELSAGPITGL…LRPIFCCIHF (184 aa)) folds into the B30.2/SPRY domain.

This is Tripartite motif-containing protein 49C (TRIM49C) from Homo sapiens (Human).